The chain runs to 296 residues: Endonuclease 5 (296 aa).

The signal sequence occupies residues Met1–Cys20. A divalent metal cation-binding residues include Trp21 and His26. Trp21 to His26 contributes to the substrate binding site. Cys30 and Cys62 are joined by a disulfide. A divalent metal cation-binding residues include Asp66 and His81. Substrate-binding positions include Asp66–Ser72, His81–Asn84, and Asn91–Arg96. Intrachain disulfides connect Cys90–Cys243, Cys98–Cys108, and Cys223–Cys230. Positions 115 and 133 each coordinate substrate. The N-linked (GlcNAc...) asparagine glycan is linked to Asn115. N-linked (GlcNAc...) asparagine glycosylation is present at Asn134. Residues His144, Asp148, and His154 each coordinate a divalent metal cation. A substrate binding region spans residues His144–Tyr193. The N-linked (GlcNAc...) asparagine glycan is linked to Asn173. His178 and Asp182 together coordinate a divalent metal cation. A glycan (N-linked (GlcNAc...) asparagine) is linked at Asn195. The propeptide at Ala281–Leu296 is removed in mature form.

Belongs to the nuclease type I family. As to quaternary structure, monomer. Requires Zn(2+) as cofactor.

The enzyme catalyses Endonucleolytic cleavage to 5'-phosphomononucleotide and 5'-phosphooligonucleotide end-products.. Hydrolyzes, with low efficiency, only single-stranded DNA and RNA without apparent specificity for bases. Endonuclease that recognizes and cleaves some mismatches with high efficiency, including heteroduplex double-stranded DNA; mostly efficient on T/G, A/G and G/G mismatches, less efficient for T/T and poorly efficient for C/C, A/A, T/C and A/C. The polypeptide is Endonuclease 5 (Arabidopsis thaliana (Mouse-ear cress)).